Here is a 38-residue protein sequence, read N- to C-terminus: Photosystem II reaction center protein L (38 aa).

Residues 17–37 (SLFWGLLLIFVLAVLFSSYFF) traverse the membrane as a helical segment.

It belongs to the PsbL family. As to quaternary structure, PSII is composed of 1 copy each of membrane proteins PsbA, PsbB, PsbC, PsbD, PsbE, PsbF, PsbH, PsbI, PsbJ, PsbK, PsbL, PsbM, PsbT, PsbX, PsbY, PsbZ, Psb30/Ycf12, at least 3 peripheral proteins of the oxygen-evolving complex and a large number of cofactors. It forms dimeric complexes.

It is found in the plastid. It localises to the chloroplast thylakoid membrane. One of the components of the core complex of photosystem II (PSII). PSII is a light-driven water:plastoquinone oxidoreductase that uses light energy to abstract electrons from H(2)O, generating O(2) and a proton gradient subsequently used for ATP formation. It consists of a core antenna complex that captures photons, and an electron transfer chain that converts photonic excitation into a charge separation. This subunit is found at the monomer-monomer interface and is required for correct PSII assembly and/or dimerization. This is Photosystem II reaction center protein L from Rhodomonas salina (Cryptomonas salina).